The following is a 379-amino-acid chain: Cytoplasmic tRNA 2-thiolation protein 1 (379 aa).

This sequence belongs to the TtcA family. CTU1/NCS6/ATPBD3 subfamily.

It is found in the cytoplasm. It participates in tRNA modification; 5-methoxycarbonylmethyl-2-thiouridine-tRNA biosynthesis. In terms of biological role, plays a central role in 2-thiolation of mcm(5)S(2)U at tRNA wobble positions of tRNA(Lys), tRNA(Glu) and tRNA(Gln). Directly binds tRNAs and probably acts by catalyzing adenylation of tRNAs, an intermediate required for 2-thiolation. It is unclear whether it acts as a sulfurtransferase that transfers sulfur from thiocarboxylated URM1 onto the uridine of tRNAs at wobble position. Prior mcm(5) tRNA modification by the elongator complex is required for 2-thiolation. May also be involved in protein urmylation. The chain is Cytoplasmic tRNA 2-thiolation protein 1 from Lodderomyces elongisporus (strain ATCC 11503 / CBS 2605 / JCM 1781 / NBRC 1676 / NRRL YB-4239) (Yeast).